Consider the following 141-residue polypeptide: Guanyl-specific ribonuclease Sa3 (141 aa).

Positions 1–36 form a signal peptide, or 43; it reads MRIPPRLVALAGAAAVAATLIAGPVAAAAPASHAVA. Cysteines 52 and 141 form a disulfide. Glu99 functions as the Proton acceptor in the catalytic mechanism. The active-site Proton donor is His130.

This sequence belongs to the ribonuclease N1/T1 family.

Its subcellular location is the secreted. The enzyme catalyses [RNA] containing guanosine + H2O = an [RNA fragment]-3'-guanosine-3'-phosphate + a 5'-hydroxy-ribonucleotide-3'-[RNA fragment].. The protein is Guanyl-specific ribonuclease Sa3 (rnaSA3) of Kitasatospora aureofaciens (Streptomyces aureofaciens).